We begin with the raw amino-acid sequence, 439 residues long: MPVSIVIGSQWGDEGKGKIVDLLSPDVDIVARYQGGANAGHTIVWDEEGETEEFVLHLVPSGIFHEGVTCVIGNGVVLDPKAILEEIEKIESLGIDVEGRLKISHNAHLIMPYHKAIEAAQEEDRASASDDDEIGTTGRGIGPAYTDKFARTGIRVVDLLDEDVLRRKLRRSIEEKNAILRDVYDAEALDVDRIVEEYVEFDQKIDDYVTDTSAYLSRALDDGARVLAEGAQGSLLDVDFGSYPYVTSSHPTAGGCCTGLGVSPTEIDRVLGIAKAYCTRVGNGPFPTELDGEVGQALREKGGEFGATTGRPRRCGWLDLVALRYTCMVNGFNELALTKLDILSGIDELKVCTEYRYDGKTTRRFPSEPQNLTRVEPQYETLPGWEADISAVRHVDDLPRAAQDYLAFIENYLDVEIGLVSNGPRRSQIITDVQPMAAA.

GTP contacts are provided by residues 12 to 18 (GDEGKGK) and 40 to 42 (GHT). Catalysis depends on Asp-13, which acts as the Proton acceptor. The Mg(2+) site is built by Asp-13 and Gly-40. Residues 13–16 (DEGK), 38–41 (NAGH), Thr-137, Arg-151, Gln-232, Thr-247, and Arg-311 contribute to the IMP site. Catalysis depends on His-41, which acts as the Proton donor. Residue 307–313 (ATTGRPR) participates in substrate binding. Residues Arg-313, 339–341 (KLD), and 421–423 (SNG) each bind GTP.

The protein belongs to the adenylosuccinate synthetase family. As to quaternary structure, homodimer. It depends on Mg(2+) as a cofactor.

Its subcellular location is the cytoplasm. The enzyme catalyses IMP + L-aspartate + GTP = N(6)-(1,2-dicarboxyethyl)-AMP + GDP + phosphate + 2 H(+). It participates in purine metabolism; AMP biosynthesis via de novo pathway; AMP from IMP: step 1/2. Its function is as follows. Plays an important role in the de novo pathway of purine nucleotide biosynthesis. Catalyzes the first committed step in the biosynthesis of AMP from IMP. The protein is Adenylosuccinate synthetase of Salinibacter ruber (strain DSM 13855 / M31).